Reading from the N-terminus, the 654-residue chain is Protein THALLO (654 aa).

A compositionally biased stretch (basic residues) spans 1–16 (MGKKGGTLKRSSKSTK). Disordered stretches follow at residues 1-23 (MGKKGGTLKRSSKSTKTRKDIVE), 35-145 (KQRD…SDDE), and 164-212 (SITA…KDTH). Positions 2–9 (GKKGGTLK) match the Nuclear localization signal 1 motif. 3 stretches are compositionally biased toward acidic residues: residues 44–56 (VNDDTDESDEDDV), 64–82 (GVDDESEEDEDTEDEEEAE), and 103–114 (GDDEMADDDKDK). Residues 140–160 (LSSDDEDIKAEEEEVIRLRAE) are a coiled coil. The segment covering 171-181 (GLDDDSEEDSD) has biased composition (acidic residues). Over residues 182–212 (RELTMEEISDKGKQATKSITDKKEKGDKDTH) the composition is skewed to basic and acidic residues. Residues 243–263 (LSELNDAVEELESKINPVMNK) are a coiled coil. Disordered regions lie at residues 362 to 397 (SDSVDRITQDTAKPMKIDNAREEKKKKGEKRKHQND), 470 to 492 (VSTKRKPKTISGDDDLPQRDDIG), and 509 to 654 (KSSE…SIRM). Residues 364–387 (SVDRITQDTAKPMKIDNAREEKKK) show a composition bias toward basic and acidic residues. Positions 524 to 546 (SDDEDDNDGDNNDMVDNDGESED) are enriched in acidic residues. A compositionally biased stretch (basic residues) spans 552–561 (VKQKQQAKRA). Over residues 588-599 (SNQMVSNRGLTR) the composition is skewed to polar residues. The Nuclear localization signal 2 motif lies at 608–615 (PRKKYRKN). Residues 645 to 654 (NPNTSRSIRM) are compositionally biased toward polar residues.

The protein belongs to the SAS10 family. As to quaternary structure, interacts with NUCL1, NUCL2, JMJ14, NOF1 and MPP10 in the nucleus. In terms of tissue distribution, mainly present in tissues undergoing rapid cellular growth and differentiation. Mostly expressed in shoots and flowers, and, to a lower extent, in leaves, siliques, roots and seedlings.

The protein resides in the nucleus. Its subcellular location is the nucleolus. In terms of biological role, essential protein during embryogenesis. Involved both in gene transcription regulation and in processing events critical for proper rRNA biogenesis and nucleolar organization during reproduction; contributes to pre-rRNA processing at the 5' external transcribed spacer. Binds RNA. This chain is Protein THALLO, found in Arabidopsis thaliana (Mouse-ear cress).